The primary structure comprises 427 residues: ATP-sensitive inward rectifier potassium channel 12 (427 aa).

At 1–77 the chain is on the cytoplasmic side; sequence MTASGRTNPY…LADMFTTCVD (77 aa). Residue cysteine 75 is modified to S-nitrosocysteine. Residues 78–104 form a helical membrane-spanning segment; that stretch reads IRWRYMLLIFSLAFLASWLLFGVIFWV. A 1,2-diacyl-sn-glycero-3-phospho-(1D-myo-inositol-4,5-bisphosphate) is bound by residues arginine 79 and arginine 81. At 105-129 the chain is on the extracellular side; the sequence is IAVAHGDLEPAEAHGRTPCVLQVHG. Cysteine 123 and cysteine 155 are oxidised to a cystine. An intramembrane region (helical; Pore-forming) is located at residues 130 to 146; that stretch reads FMAAFLFSIETQTTIGY. K(+) is bound by residues threonine 143, isoleucine 144, glycine 145, and tyrosine 146. The short motif at 143–148 is the Selectivity filter element; sequence TIGYGL. The Extracellular segment spans residues 147–155; sequence GLRCVTEEC. The chain crosses the membrane as a helical span at residues 156–183; sequence PVAVFMVVAQSIVGCIIDSFMIGAIMAK. Lysine 183 and lysine 188 together coordinate a 1,2-diacyl-sn-glycero-3-phospho-(1D-myo-inositol-4,5-bisphosphate). The Cytoplasmic segment spans residues 184–427; that stretch reads MARPKKRAQT…QRPYRRESEI (244 aa). A compositionally biased stretch (acidic residues) spans 387–396; the sequence is DEEDEVDGEQ. The interval 387-427 is disordered; that stretch reads DEEDEVDGEQDSLGPQARRDFDRPQAGTALEQRPYRRESEI. Positions 425–427 match the PDZ-binding motif; that stretch reads SEI.

It belongs to the inward rectifier-type potassium channel (TC 1.A.2.1) family. KCNJ12 subfamily. In terms of assembly, homotetramer. Forms heteromer with KCNJ4. Association, via its PDZ-recognition domain, with LIN7A, LIN7B, LIN7C, DLG1, CASK and APBA1 plays a key role in its localization and trafficking.

It is found in the membrane. The enzyme catalyses K(+)(in) = K(+)(out). Activated by phosphatidylinositol 4,5-biphosphate (PtdIns(4,5)P2). PtdIns(4,5)P2 binding to the cytoplasmic side of the channel triggers a conformation change leading to channel opening. Its function is as follows. Inward rectifying potassium channel that probably participates in controlling the resting membrane potential in electrically excitable cells. Probably participates in establishing action potential waveform and excitability of neuronal and muscle tissues. Inward rectifier potassium channels are characterized by a greater tendency to allow potassium to flow into the cell rather than out of it. Their voltage dependence is regulated by the concentration of extracellular potassium; as external potassium is raised, the voltage range of the channel opening shifts to more positive voltages. The inward rectification is mainly due to the blockage of outward current by internal magnesium. The protein is ATP-sensitive inward rectifier potassium channel 12 (KCNJ12) of Bos taurus (Bovine).